We begin with the raw amino-acid sequence, 383 residues long: Flagellum-associated coiled-coil domain-containing protein 1 (383 aa).

Residues 26-79 are disordered; sequence PYPLPKHPTGKFKPVLPPPISKEHNSLLSQPGKSTVSPRDKVQSGNTESSKAPS. Residues 51-77 are compositionally biased toward polar residues; it reads SLLSQPGKSTVSPRDKVQSGNTESSKA. Coiled coils occupy residues 125 to 220 and 276 to 359; these read TDII…YLKS and KKMN…FQTK. Position 354 is an N6-acetyllysine (lysine 354).

Isoform 1 is specific to germ cells of the testis and localizes to the principal piece of the sperm flagellum. Isoform 2 seems to be expressed mainly in somatic cells of the testis, and is not detected in mature spermatozoa (at protein level). Isoform 2 may also be expressed weakly in brain.

It localises to the cytoplasm. The protein resides in the cytoplasmic granule. Its subcellular location is the cell projection. The protein localises to the cilium. It is found in the flagellum. This Mus musculus (Mouse) protein is Flagellum-associated coiled-coil domain-containing protein 1.